The sequence spans 115 residues: Large ribosomal subunit protein uL22 (115 aa).

It belongs to the universal ribosomal protein uL22 family. In terms of assembly, part of the 50S ribosomal subunit.

Functionally, this protein binds specifically to 23S rRNA; its binding is stimulated by other ribosomal proteins, e.g. L4, L17, and L20. It is important during the early stages of 50S assembly. It makes multiple contacts with different domains of the 23S rRNA in the assembled 50S subunit and ribosome. In terms of biological role, the globular domain of the protein is located near the polypeptide exit tunnel on the outside of the subunit, while an extended beta-hairpin is found that lines the wall of the exit tunnel in the center of the 70S ribosome. The polypeptide is Large ribosomal subunit protein uL22 (Limosilactobacillus reuteri subsp. reuteri (strain JCM 1112) (Lactobacillus reuteri)).